The primary structure comprises 441 residues: Xaa-Pro dipeptidase (441 aa).

Mn(2+) contacts are provided by D244, D255, H336, E381, and E420.

It belongs to the peptidase M24B family. Bacterial-type prolidase subfamily. Mn(2+) is required as a cofactor.

The enzyme catalyses Xaa-L-Pro dipeptide + H2O = an L-alpha-amino acid + L-proline. In terms of biological role, splits dipeptides with a prolyl residue in the C-terminal position. This is Xaa-Pro dipeptidase from Xanthomonas oryzae pv. oryzae (strain MAFF 311018).